Reading from the N-terminus, the 410-residue chain is Multidrug resistance protein MdtM (410 aa).

Topologically, residues 1 to 11 are cytoplasmic; the sequence is MPRFFTRHAAT. A helical transmembrane segment spans residues 12–32; the sequence is LFFPMALILYDFAAYLSTDLI. Over 33-48 the chain is Periplasmic; sequence QPGIINVVRDFNADVS. The chain crosses the membrane as a helical span at residues 49-69; that stretch reads LAPAAVSLYLAGGMALQWLLG. Residues 70–78 lie on the Cytoplasmic side of the membrane; it reads PLSDRIGRR. Residues 79 to 99 form a helical membrane-spanning segment; it reads PVLITGALIFTLACAATMFTT. The Periplasmic segment spans residues 100 to 103; it reads SMTQ. The chain crosses the membrane as a helical span at residues 104 to 124; the sequence is FLIARAIQGTSICFIATVGYV. Residues 125-140 are Cytoplasmic-facing; the sequence is TVQEAFGQTKGIKLMA. The helical transmembrane segment at 141-161 threads the bilayer; the sequence is IITSIVLIAPIIGPLSGAALM. Residues 162 to 167 lie on the Periplasmic side of the membrane; it reads HFMHWK. A helical transmembrane segment spans residues 168–188; sequence VLFAIIAVMGFISFVGLLLAM. The Cytoplasmic portion of the chain corresponds to 189–216; the sequence is PETVKRGAVPFSAKSVLRDFRNVFCNRL. Residues 217–237 traverse the membrane as a helical segment; the sequence is FLFGAATISLSYIPMMSWVAV. Topologically, residues 238–251 are periplasmic; the sequence is SPVILIDAGSLTTS. A helical membrane pass occupies residues 252-272; that stretch reads QFAWTQVPVFGAVIVANAIVA. The Cytoplasmic segment spans residues 273 to 282; sequence RFVKDPTEPR. Residues 283–303 form a helical membrane-spanning segment; that stretch reads FIWRAVPIQLVGLSLLIVGNL. The Periplasmic segment spans residues 304 to 307; sequence LSPH. A helical membrane pass occupies residues 308 to 328; the sequence is VWLWSVLGTSLYAFGIGLIFP. Topologically, residues 329–348 are cytoplasmic; the sequence is TLFRFTLFSNKLPKGTVSAS. A helical membrane pass occupies residues 349–369; that stretch reads LNMVILMVMSVSVEIGRWLWF. Topologically, residues 370–373 are periplasmic; that stretch reads NGGR. Residues 374-394 traverse the membrane as a helical segment; sequence LPFHLLAVVAGVIVVFTLAGL. Residues 395–410 are Cytoplasmic-facing; sequence LNRVRQHQAAELVEEQ.

This sequence belongs to the major facilitator superfamily. In terms of assembly, monomer.

The protein resides in the cell inner membrane. The catalysed reaction is Na(+)(in) + 2 H(+)(out) = Na(+)(out) + 2 H(+)(in). It carries out the reaction K(+)(in) + H(+)(out) = K(+)(out) + H(+)(in). Its activity is regulated as follows. Efflux is inhibited by the ionophore carbonyl cyanide 3-chlorophenylhydrazone (CCCP). Its function is as follows. Proton-dependent efflux pump. Confers resistance to a broad spectrum of chemically unrelated substrates. Overexpression confers resistance to acriflavine, chloramphenicol, norfloxacin, ethidium bromide and tetraphenylphosphonium bromide (TPP). Can also export a broad range of quaternary ammonium compounds (QACs) and contribute to the intrinsic resistance of E.coli to these antimicrobial compounds. In addition to its role in multidrug resistance, MdtM likely plays a physiological role in alkaline pH homeostasis and in resistance to bile salts. May function in alkaline pH homeostasis when millimolar concentrations of sodium or potassium are present in the growth medium. When overexpressed, can confer a tolerance to alkaline pH values up to 9.75. Probably acts as a low-affinity antiporter that catalyzes the exchange of internal Na(+) and K(+) cations for extracellular protons to maintain a stable internal pH, acid relative to outside, during exposure to alkaline environments. Can also catalyze Rb(+)/H(+) and Li(+)/H(+) antiport, but not Ca(2+)/H(+) exchange. The exact stoichiometry of antiport is unknown. Finally, it could contribute to bile salt resistance by catalyzing the transport of bile salts out of the cell cytoplasm. Mediates a bile salt/H(+) exchange driven by the electrochemical gradient. Binds to cholate and deoxycholate with micromolar affinity and catalyzes both cholate/H(+) and deoxycholate/H(+) exchange reactions. The polypeptide is Multidrug resistance protein MdtM (Escherichia coli (strain K12)).